The primary structure comprises 336 residues: 3-isopropylmalate dehydrogenase (336 aa).

Arg-87, Arg-97, Arg-121, and Asp-211 together coordinate substrate. Residues Asp-211, Asp-235, and Asp-239 each contribute to the Mg(2+) site. Gly-271–Asp-283 is an NAD(+) binding site.

The protein belongs to the isocitrate and isopropylmalate dehydrogenases family. LeuB type 2 subfamily. Homodimer. Requires Mg(2+) as cofactor. Mn(2+) serves as cofactor.

It is found in the cytoplasm. The enzyme catalyses (2R,3S)-3-isopropylmalate + NAD(+) = 4-methyl-2-oxopentanoate + CO2 + NADH. Its pathway is amino-acid biosynthesis; L-leucine biosynthesis; L-leucine from 3-methyl-2-oxobutanoate: step 3/4. Functionally, catalyzes the oxidation of 3-carboxy-2-hydroxy-4-methylpentanoate (3-isopropylmalate) to 3-carboxy-4-methyl-2-oxopentanoate. The product decarboxylates to 4-methyl-2 oxopentanoate. The sequence is that of 3-isopropylmalate dehydrogenase from Mycobacterium sp. (strain JLS).